Reading from the N-terminus, the 1252-residue chain is Protein ITPRID2 (1252 aa).

The interval 28–70 is disordered; it reads CRSSWQASETEDLSTETTTQDEDEDDEEDLPGTKLPAPAGRGN. Acidic residues predominate over residues 36-57; sequence ETEDLSTETTTQDEDEDDEEDL. The residue at position 85 (Thr85) is a Phosphothreonine. Phosphoserine is present on residues Ser90, Ser109, Ser207, Ser268, and Ser328. 3 disordered regions span residues 306–483, 552–575, and 595–636; these read DKTE…HVPA, HVTP…APLQ, and FPQC…GELP. A compositionally biased stretch (low complexity) spans 357–372; the sequence is TVTEEVSGSSSTVTDS. Composition is skewed to basic and acidic residues over residues 395-407 and 415-428; these read SREA…DPLR and DLGH…HCEL. The span at 429–441 shows a compositional bias: low complexity; that stretch reads ESSSELKSAQASS. Position 465 is a phosphoserine (Ser465). 7 positions are modified to phosphoserine: Ser643, Ser667, Ser736, Ser738, Ser745, Ser758, and Ser766. Residue Lys807 forms a Glycyl lysine isopeptide (Lys-Gly) (interchain with G-Cter in SUMO2) linkage. Residues Ser866 and Ser898 each carry the phosphoserine modification. A coiled-coil region spans residues 955 to 1031; the sequence is QELQVVRRSL…LLGLDEQLRA (77 aa). Phosphoserine is present on residues Ser1036, Ser1051, Ser1056, Ser1059, and Ser1114. Disordered regions lie at residues 1095–1131 and 1147–1180; these read GESS…GSKP and ALTP…ASPV. A compositionally biased stretch (low complexity) spans 1103-1117; sequence SQATSESSSVCSSPS. Residue Thr1149 is modified to Phosphothreonine. Positions 1151–1161 are enriched in polar residues; the sequence is TAPSRTGSVQT. A Phosphoserine modification is found at Ser1154. Thr1161 is subject to Phosphothreonine.

It is found in the cytoplasm. The protein is Protein ITPRID2 (Itprid2) of Mus musculus (Mouse).